Reading from the N-terminus, the 510-residue chain is Maturase K (510 aa).

Belongs to the intron maturase 2 family. MatK subfamily.

It localises to the plastid. Usually encoded in the trnK tRNA gene intron. Probably assists in splicing its own and other chloroplast group II introns. This Bartsia alpina (Velvet bells) protein is Maturase K.